Here is a 172-residue protein sequence, read N- to C-terminus: Zinc finger protein 580 (172 aa).

The segment at 1–93 (MLLLPPRPPH…GEPGPRKGYS (93 aa)) is disordered. A compositionally biased stretch (pro residues) spans 19–30 (MDPPPPKAPPFP). Residue K31 forms a Glycyl lysine isopeptide (Lys-Gly) (interchain with G-Cter in SUMO2) linkage. Low complexity predominate over residues 31–44 (KAEGPSSTPSSAAG). A compositionally biased stretch (pro residues) spans 75–86 (GPPQREAPPGEP). The C2H2-type 1 zinc-finger motif lies at 92 to 114 (YSCPECARVFASPLRLQSHRVSH). A Glycyl lysine isopeptide (Lys-Gly) (interchain with G-Cter in SUMO2) cross-link involves residue K118. 2 consecutive C2H2-type zinc fingers follow at residues 120 to 142 (FTCGACGKAFKRSSHLSRHRATH) and 150 to 172 (HTCPLCPRRFQDAAELAQHVRLH).

In terms of assembly, interacts with SMAD2. Expressed in endothelial cells.

It is found in the nucleus. In terms of biological role, involved in the regulation of endothelial cell proliferation and migration. Mediates H(2)O(2)-induced leukocyte chemotaxis by elevating interleukin-8 production and may play a role in inflammation. May be involved in transcriptional regulation. This is Zinc finger protein 580 (ZNF580) from Homo sapiens (Human).